Reading from the N-terminus, the 194-residue chain is Chitin synthase 2 (194 aa).

It belongs to the chitin synthase family. Class III subfamily.

The protein resides in the cell membrane. It catalyses the reaction [(1-&gt;4)-N-acetyl-beta-D-glucosaminyl](n) + UDP-N-acetyl-alpha-D-glucosamine = [(1-&gt;4)-N-acetyl-beta-D-glucosaminyl](n+1) + UDP + H(+). Functionally, polymerizes chitin, a structural polymer of the cell wall and septum, by transferring the sugar moiety of UDP-GlcNAc to the non-reducing end of the growing chitin polymer. The protein is Chitin synthase 2 (CHS2) of Ajellomyces capsulatus (Darling's disease fungus).